A 1155-amino-acid chain; its full sequence is uncharacterized protein (1155 aa).

A signal peptide spans 1–19; that stretch reads MKKNIFITSLLILLLLLSS. Cysteine 20 carries the N-palmitoyl cysteine lipid modification. Residue cysteine 20 is the site of S-diacylglycerol cysteine attachment. 4 helical membrane passes run 289–309, 395–415, 424–444, and 459–479; these read ISVSAILTLYIMFTVLSFLIG, LGFIYIILYLIALYFIFFLIF, ALITIGMIIIMGPIFICFMLF, and ISYALQPIILFAGIAFISMII.

It belongs to the TrbL/VirB6 family.

It is found in the cell membrane. This is an uncharacterized protein from Rickettsia prowazekii (strain Madrid E).